Consider the following 233-residue polypeptide: Gamma-glutamyl-hercynylcysteine sulfoxide hydrolase (233 aa).

The active-site Nucleophile is Cys2. The 232-residue stretch at 2 to 233 (CRHLGWLGAQ…TALDRAKGPR (232 aa)) folds into the Glutamine amidotransferase type-2 domain.

It carries out the reaction gamma-L-glutamyl-hercynylcysteine S-oxide + H2O = S-(hercyn-2-yl)-L-cysteine S-oxide + L-glutamate. It participates in amino-acid biosynthesis; ergothioneine biosynthesis. Functionally, catalyzes the hydrolysis of the gamma-glutamyl amide bond of hercynyl-gamma-L-glutamyl-L-cysteine sulfoxide to produce hercynylcysteine sulfoxide, a step in the biosynthesis pathway of ergothioneine. ERG is one of the major redox buffers which protects bacteria against redox stressors and antibiotics; loss of ERG or mycothiol (MSH, the other major redox buffer in this bacteria) leads to respiratory alterations and bioenergetic deficiencies that negatively impact virulence. This is Gamma-glutamyl-hercynylcysteine sulfoxide hydrolase from Mycobacterium tuberculosis (strain CDC 1551 / Oshkosh).